We begin with the raw amino-acid sequence, 146 residues long: Hemoglobin subunit beta (146 aa).

Val1 carries the N-acetylvaline modification. One can recognise a Globin domain in the interval 2–146 (HLTGEEKTAV…VANALAHKYH (145 aa)). Thr12 carries the phosphothreonine modification. The residue at position 44 (Ser44) is a Phosphoserine. N6-acetyllysine is present on Lys59. Position 63 (His63) interacts with heme b. Residue Lys82 is modified to N6-acetyllysine. His92 lines the heme b pocket. An S-nitrosocysteine modification is found at Cys93. Residue Lys144 is modified to N6-acetyllysine.

This sequence belongs to the globin family. In terms of assembly, heterotetramer of two alpha chains and two beta chains. In terms of tissue distribution, red blood cells.

In terms of biological role, involved in oxygen transport from the lung to the various peripheral tissues. This Nasua nasua (Ring-tailed coati) protein is Hemoglobin subunit beta (HBB).